Consider the following 440-residue polypeptide: Ultraviolet-B receptor UVR8 (440 aa).

N-acetylalanine is present on A2. 8 RCC1 repeats span residues 2 to 31 (AEDM…VALL), 32 to 84 (SGDI…AYSQ), 86 to 137 (GMEV…AVTM), 139 to 189 (GEVQ…AVTE), 190 to 241 (DGDL…SVSY), 243 to 293 (GALY…ALTS), 294 to 345 (DGKL…AVTE), and 347 to 399 (NNVF…SGKS). The interval 397–423 (GKSWVSPAERYAVVPDETGLTDGSSKG) is required for interaction with COP1. The disordered stretch occupies residues 413-440 (ETGLTDGSSKGNGGDISVPQTDVKRVRI).

In terms of assembly, homodimer in the absence of UV-B, but absorption of UV-B induces monomerization of UVR8 and interaction with COP1. Interacts with RUP1, RUP2 and histone H2B.

It localises to the nucleus. It is found in the cytoplasm. The protein localises to the cytosol. In terms of biological role, UV-B specific signaling component that acts as a UV-B photoreceptor and plays a key role in establishing UV-protective responses in plants. Upon UV-B irradiation, UVR8 undergoes an immediate switch from homodimer to monomer, accumulates in the nucleus, interacts with the photomorphogenic repressor COP1 and regulates the expression of the transcription factor HY5 by associating with chromatin (through histone H2B binding) in the HY5 promoter region. UVR8 is involved in controlling aspects of leaf growth and morphogenesis in response to UV-B, is required for normal progression of endocycle and has a regulatory role in stomatal differentiation. Is required for plant circadian clock response to photomorphogenic UV-B light, partly through the transcriptional activation of responsive clock genes. Promotes photosynthetic efficiency at elevated levels of UV-B. Plays a role in mediating the effects of UV-B radiation on pathogen resistance by controlling the expression of the sinapate biosynthetic pathway. The two tryptophans, Trp-285 and Trp-233, serve collectively as the UV-B chromophore. The protein is Ultraviolet-B receptor UVR8 of Arabidopsis thaliana (Mouse-ear cress).